The chain runs to 228 residues: uncharacterized protein (228 aa).

An ABC transporter domain is found at 7 to 228 (VEVHHLKKSV…LVNGQLQEEA (222 aa)). 43–50 (GESGSGKS) contacts ATP.

It belongs to the ABC transporter superfamily.

This is an uncharacterized protein from Escherichia coli O157:H7.